Reading from the N-terminus, the 256-residue chain is MNNDVFPNKFKAALAAKQVQIGCWSALSNPISTEVLGLAGFDWLVLDGEHAPNDISTFIPQLMALKGSASAPVVRVPTNEPVIIKRLLDIGFYNFLIPFVETKEEAEQAVASTRYPPEGIRGVSVSHRTNMFGTVADYFAQSNKNITILVQIESQQGVDNVDAIAATEGVDGIFVGPSDLAAALGHLGNASHPDVQKAIQHIFNRASAHGKPSGILAPVEADARRYLEWGATFVAVGSDLGVFRSATQKLADTFKK.

H50 serves as the catalytic Proton acceptor. Q151 contributes to the substrate binding site. Residue E153 participates in Mg(2+) binding. S178 and D179 together coordinate substrate. D179 is a binding site for Mg(2+).

Belongs to the HpcH/HpaI aldolase family. KDGluc aldolase subfamily. As to quaternary structure, homohexamer; trimer of dimers. Mg(2+) serves as cofactor.

The catalysed reaction is 5-dehydro-4-deoxy-D-glucarate = 2-hydroxy-3-oxopropanoate + pyruvate. It carries out the reaction 2-dehydro-3-deoxy-D-glucarate = 2-hydroxy-3-oxopropanoate + pyruvate. It participates in carbohydrate acid metabolism; galactarate degradation; D-glycerate from galactarate: step 2/3. Its function is as follows. Catalyzes the reversible retro-aldol cleavage of both 5-keto-4-deoxy-D-glucarate and 2-keto-3-deoxy-D-glucarate to pyruvate and tartronic semialdehyde. The protein is 5-keto-4-deoxy-D-glucarate aldolase of Shigella sonnei (strain Ss046).